A 470-amino-acid polypeptide reads, in one-letter code: MTPSTSTPHTSTAPHTSTGQSTDGAAQPGDGSSAYEAGFTESASGRVYTVTGGDWEEILGAGEQDAERIVVNMGPQHPSTHGVLRLVLEIDGETVTETRLVIGYLHTGIEKSCEYRTWTQAVTFLTRADYLSPLYNEAAYCLSVEKLLGITDDIPERATVIRVLVMELQRIASHLVWLATGGMELGATTAMIFGFREREKVLDLLELITGLRMNHAFIRPGGLAQDLPDGTERAIREFLADMPKRIREYHRLLTGQPIWKARMVDVNVLDAAGCIALGVTGPVLRAAGLPWDLRKTMPYCGYETYEFDVPTALEADSFARYLVRLEEMGESLKIIEQCLDRLRPGPVMVADKKIAWPAQLSIGADGMGNSLAHIRNIMGTSMEALIHHFKLVTEGFRVPPGQVYTQIESPRGELGYHVVSDGGTRPFRVHVRDPSFVNLQAVPALTEGGQVADVIVGVASVDPVLGGVDR.

Low complexity predominate over residues 1 to 18 (MTPSTSTPHTSTAPHTST). The tract at residues 1 to 37 (MTPSTSTPHTSTAPHTSTGQSTDGAAQPGDGSSAYEA) is disordered.

It belongs to the complex I 49 kDa subunit family. In terms of assembly, NDH-1 is composed of 14 different subunits. Subunits NuoB, C, D, E, F, and G constitute the peripheral sector of the complex.

It is found in the cell membrane. It carries out the reaction a quinone + NADH + 5 H(+)(in) = a quinol + NAD(+) + 4 H(+)(out). Functionally, NDH-1 shuttles electrons from NADH, via FMN and iron-sulfur (Fe-S) centers, to quinones in the respiratory chain. The immediate electron acceptor for the enzyme in this species is believed to be a menaquinone. Couples the redox reaction to proton translocation (for every two electrons transferred, four hydrogen ions are translocated across the cytoplasmic membrane), and thus conserves the redox energy in a proton gradient. The polypeptide is NADH-quinone oxidoreductase subunit D (Frankia alni (strain DSM 45986 / CECT 9034 / ACN14a)).